Here is a 205-residue protein sequence, read N- to C-terminus: Anaerobic dimethyl sulfoxide reductase chain B (205 aa).

4Fe-4S ferredoxin-type domains lie at 5 to 33, 59 to 89, and 90 to 119; these read YGFFIDSSRCTGCKTCELACKDYKDLTPE, FAYYLSISCNHCEDPACTKVCPSGAMHKRED, and GFVVVDEDVCIGCRYCHMACPYGAPQYNET. Positions 14, 17, 20, 24, 67, 70, 75, 79, 99, 102, 105, 109, 126, 129, 141, and 145 each coordinate [4Fe-4S] cluster. A disordered region spans residues 184–205; that stretch reads KPNANSRPTGDTTGYLANPKEV. The span at 186–195 shows a compositional bias: polar residues; the sequence is NANSRPTGDT.

As to quaternary structure, heterotrimeric enzyme composed of a catalytic heterodimer (DmsAB) and a membrane anchor protein (DmsC). Requires [4Fe-4S] cluster as cofactor.

Functionally, electron transfer subunit of the terminal reductase during anaerobic growth on various sulfoxide and N-oxide compounds. The chain is Anaerobic dimethyl sulfoxide reductase chain B (dmsB) from Escherichia coli (strain K12).